A 236-amino-acid chain; its full sequence is (5-formylfuran-3-yl)methyl phosphate synthase (236 aa).

Catalysis depends on K27, which acts as the Schiff-base intermediate with substrate. Catalysis depends on K85, which acts as the Proton acceptor.

This sequence belongs to the MfnB family.

It carries out the reaction 2 D-glyceraldehyde 3-phosphate = 4-(hydroxymethyl)-2-furancarboxaldehyde phosphate + phosphate + 2 H2O. Its pathway is cofactor biosynthesis; methanofuran biosynthesis. In terms of biological role, catalyzes the formation of 4-(hydroxymethyl)-2-furancarboxaldehyde phosphate (4-HFC-P) from two molecules of glyceraldehyde-3-P (GA-3-P). The sequence is that of (5-formylfuran-3-yl)methyl phosphate synthase from Methanococcus maripaludis (strain C5 / ATCC BAA-1333).